The following is a 64-amino-acid chain: Small ribosomal subunit protein bS21 (64 aa).

A disordered region spans residues 26 to 64 (DGILSEARRRTRFERPPTRRKRKDAAKRRLAIKAARKAT). Residues 43–64 (TRRKRKDAAKRRLAIKAARKAT) show a composition bias toward basic residues.

This sequence belongs to the bacterial ribosomal protein bS21 family.

This is Small ribosomal subunit protein bS21 from Dehalococcoides mccartyi (strain ATCC BAA-2100 / JCM 16839 / KCTC 5957 / BAV1).